A 348-amino-acid polypeptide reads, in one-letter code: VIP36-like protein (348 aa).

The first 38 residues, 1 to 38 (MAATLGPLGSWQQWRRCLLARDGSRMLLLLLLLGSGQG), serve as a signal peptide directing secretion. Residues 39 to 313 (PQQVGAGQTF…APLPPLSGLA (275 aa)) are Lumenal-facing. The region spanning 49–274 (EYLKREHSLS…DVISLKLFEL (226 aa)) is the L-type lectin-like domain. The a carbohydrate site is built by S93 and D128. Residues D159, Y161, and N163 each coordinate Ca(2+). 161-163 (YPN) is a binding site for a carbohydrate. A glycan (N-linked (GlcNAc...) asparagine) is linked at N181. H188 serves as a coordination point for a carbohydrate. D191 is a binding site for Ca(2+). C200 and C237 are disulfide-bonded. 258–260 (GDL) is a binding site for a carbohydrate. A helical membrane pass occupies residues 314–334 (LFHIVFFSLVIFVFAIVIGII). The Cytoplasmic portion of the chain corresponds to 335 to 348 (LYNKWQEQSRKRFY). The Endoplasmic reticulum retention signal signature appears at 344–346 (RKR).

It localises to the endoplasmic reticulum membrane. The protein resides in the golgi apparatus membrane. In terms of biological role, may be involved in the regulation of export from the endoplasmic reticulum of a subset of glycoproteins. May function as a regulator of ERGIC-53. In Pongo abelii (Sumatran orangutan), this protein is VIP36-like protein (LMAN2L).